The sequence spans 517 residues: MESLYETLRTLPLSVSIPLTTSIIIILSIVTNVVKQLWFPNPHRPPVVFHIFPFIGSTVQYGIDPYAFFFDCRDKYGDCFTFILLGKSTTVFLGPKGNDFILNGKHADLNAEDVYGKLTTPVFGEEVVYDCSNARFMDQKRLLKLGLTTDSLRCYIPKFVKEVEDYVKNSPYFKGDTGIVNITEVMAEITIYTASGSLLGNEVRSMFDSTFATLYRHLDDGFQPINFVMPGLPLPQNFRRNHARKVMEKLFSDIISKRRETGNQGDETDMIWMLMNAQYKDGEPLPDHHAARMLIAILMGGQHNTAVSGAWLLLNLAHKPHLVQELYEEQTQVLGSPQEPLTWENLQKLTLNGQVIKETLRLHSPIHSILRQVKSPMRVPGTEWVVPPSHTLLSSPGTMARSEEFFPRPSEWDPHRWDKIEPLVKTAEDGQTVDYGFGVMSKSVSSPYLPFGAGRHRCVGENYAYAQLGAIVATFIRLVHIEQPDPKAPLPAPDYSSMFSRPMNPAEIRWRRRETVE.

A helical transmembrane segment spans residues 10-30 (TLPLSVSIPLTTSIIIILSIV). A lanosterol-binding site is contributed by Tyr115. Gly300 provides a ligand contact to itraconazole. Cys458 contributes to the heme binding site.

Belongs to the cytochrome P450 family. The cofactor is heme.

The protein localises to the endoplasmic reticulum membrane. It participates in steroid metabolism; ergosterol biosynthesis. Its function is as follows. Together with cyp51A and cyp51B, encodes the sterol 14alpha-demethylase that plays a critical role in the third module of ergosterol biosynthesis pathway, being ergosterol the major sterol component in fungal membranes that participates in a variety of functions. Cyp51C does not seem to encode an active sterol 14-alpha-demethylase, but can impact indirectly on sterol 14alpha-demethylation, and is required for full virulence on host wheat ears, but not on Arabidopsis floral tissue or the fruits of apple and tomato. The third module or late pathway involves the ergosterol synthesis itself through consecutive reactions that mainly occur in the endoplasmic reticulum (ER) membrane. In filamentous fungi, during the initial step of this module, lanosterol (lanosta-8,24-dien-3beta-ol) can be metabolized to eburicol. Sterol 14alpha-demethylase catalyzes the three-step oxidative removal of the 14alpha-methyl group (C-32) of both these sterols in the form of formate, and converts eburicol and lanosterol to 14-demethyleburicol (4,4,24-trimethylergosta-8,14,24(28)-trienol) and 4,4-dimethyl-5alpha-cholesta-8,14,24-trien-3beta-ol, respectively, which are further metabolized by other enzymes in the pathway to ergosterol. The chain is Sterol 14-alpha demethylase CYP51C from Gibberella zeae (strain ATCC MYA-4620 / CBS 123657 / FGSC 9075 / NRRL 31084 / PH-1) (Wheat head blight fungus).